A 370-amino-acid chain; its full sequence is MNSGDSSLIDAVIYNHTLCDGWTNSTEGAIYHLGNTILFLGYMGGSGAYGALYIFSFLAPAFLCLALWGWLTMCGLDVFIWNLLLMLQCLAQVCHLIFRLMRDGLANEEFSALYTAVYLPLDVPVQVFKEITGAGENKVLSLAAEETYAVEGKTPIDQLSFLLSGRIRVSLEGQFLHYIFPHQFLDSPEWESLRPAEEGNFQVTLTAETDCRYISWRRRRLYLLLSKDRYIARLFSVMLGSDIADKLYSLNDKLFAKSGVRLDIRLPSLYHVLAPSPPGSEGGSASSPPRGSLGDPTVIKVDPAPSNPGSGTRNPQPDQGKNPVPKNPHQHWSSDTEMPSGEDSTSLILEDFADMTGSLMDYGHEREYLK.

A run of 2 helical transmembrane segments spans residues 51-71 and 78-98; these read ALYI…WGWL and VFIW…HLIF. The interval 275 to 349 is disordered; the sequence is PSPPGSEGGS…SGEDSTSLIL (75 aa). Low complexity predominate over residues 283–294; that stretch reads GSASSPPRGSLG. 2 stretches are compositionally biased toward polar residues: residues 307-319 and 330-347; these read NPGS…QPDQ and QHWS…STSL.

Belongs to the popeye family. Expressed in the heart and, slightly, in skeletal muscle.

The protein resides in the membrane. It localises to the cell membrane. Its subcellular location is the sarcolemma. Important for striated muscle differentiation and cardiac morphogenesis. Is also required for cardiac conduction system development, plays a regulatory function in heart rate dynamics mediated, at least in part, through cAMP-binding. This Danio rerio (Zebrafish) protein is Popeye domain-containing 2.